A 355-amino-acid polypeptide reads, in one-letter code: Ornithine transcarbamylase, mitochondrial (355 aa).

The N-terminal 35 residues, 1–35, are a transit peptide targeting the mitochondrion; sequence MLFINLRTLLNNAALRNGHNFVVRNFRCGQPVQDK. Residue lysine 71 is modified to N6-acetyllysine; alternate. The residue at position 71 (lysine 71) is an N6-succinyllysine; alternate. Lysine 81 is subject to N6-succinyllysine. Lysine 89 is subject to N6-acetyllysine; alternate. Lysine 89 is modified (N6-succinyllysine; alternate). 91–95 is a carbamoyl phosphate binding site; that stretch reads STRTR. Serine 134 bears the Phosphoserine mark. A carbamoyl phosphate-binding site is contributed by arginine 142. Residue arginine 142 coordinates L-ornithine. At lysine 145 the chain carries N6-acetyllysine; alternate. Position 145 is an N6-succinyllysine; alternate (lysine 145). Histidine 169 is a carbamoyl phosphate binding site. Asparagine 200 lines the L-ornithine pocket. N6-acetyllysine; alternate occurs at positions 222, 232, and 239. N6-succinyllysine; alternate occurs at positions 222, 232, and 239. The residue at position 244 (lysine 244) is an N6-acetyllysine. 264–268 lines the L-ornithine pocket; it reads DTWIS. 2 positions are modified to N6-succinyllysine: lysine 275 and lysine 290. Lysine 293 carries the N6-acetyllysine; alternate modification. Lysine 293 carries the N6-succinyllysine; alternate modification. 303–306 contacts L-ornithine; that stretch reads HCLP. Residue cysteine 304 is part of the active site. Residue lysine 308 is modified to N6-acetyllysine; alternate. Lysine 308 carries the post-translational modification N6-succinyllysine; alternate. Arginine 331 contacts carbamoyl phosphate. Arginine 331 contributes to the L-ornithine binding site.

The protein belongs to the aspartate/ornithine carbamoyltransferase superfamily. OTCase family. As to quaternary structure, homotrimer. In terms of processing, acetylation at Lys-89 negatively regulates ornithine carbamoyltransferase activity in response to nutrient signals.

It localises to the mitochondrion matrix. The enzyme catalyses carbamoyl phosphate + L-ornithine = L-citrulline + phosphate + H(+). It participates in nitrogen metabolism; urea cycle; L-citrulline from L-ornithine and carbamoyl phosphate: step 1/1. Negatively regulated by lysine acetylation. Catalyzes the second step of the urea cycle, the condensation of carbamoyl phosphate with L-ornithine to form L-citrulline. The urea cycle ensures the detoxification of ammonia by converting it to urea for excretion. In Ovis aries (Sheep), this protein is Ornithine transcarbamylase, mitochondrial.